Reading from the N-terminus, the 93-residue chain is Large ribosomal subunit protein eL42 (93 aa).

Zn(2+) is bound by residues C11, C14, C71, and C74. A C4-type zinc finger spans residues C11–C74.

This sequence belongs to the eukaryotic ribosomal protein eL42 family. In terms of assembly, part of the 50S ribosomal subunit. Requires Zn(2+) as cofactor.

Binds to the 23S rRNA. The protein is Large ribosomal subunit protein eL42 of Thermoplasma acidophilum (strain ATCC 25905 / DSM 1728 / JCM 9062 / NBRC 15155 / AMRC-C165).